A 29-amino-acid polypeptide reads, in one-letter code: Protamine-like protein (29 aa).

The disordered stretch occupies residues 1–29; that stretch reads MRSFDQGSTRAPARERCRRQRPEGRSAQR. Basic and acidic residues predominate over residues 12–29; the sequence is PARERCRRQRPEGRSAQR.

This is Protamine-like protein (tpr) from Escherichia coli (strain K12).